We begin with the raw amino-acid sequence, 421 residues long: Testin (421 aa).

The region spanning 92–199 (MILTNPVAAK…GDVKLPCEMD (108 aa)) is the PET domain. The disordered stretch occupies residues 133–164 (EKQPVAGSEGAQYRKKQLAKQLPAHDQDPSKC). Residues 155–164 (PAHDQDPSKC) are compositionally biased toward basic and acidic residues. LIM zinc-binding domains are found at residues 234-297 (YSCY…CDSE), 299-359 (PRCA…NHAV), and 362-421 (QGCH…KMMS).

It belongs to the prickle / espinas / testin family. Interacts via LIM domain 1 with ZYX. Interacts (via LIM domain 3) with ENAH and VASP. Interacts with ALKBH4, talin, actin, alpha-actinin, GRIP1 and PXN. Interacts (via LIM domain 2) with ACTL7A (via N-terminus). Heterodimer with ACTL7A; the heterodimer interacts with ENAH to form a heterotrimer.

The protein localises to the cytoplasm. Its subcellular location is the cell junction. It localises to the focal adhesion. In terms of biological role, scaffold protein that may play a role in cell adhesion, cell spreading and in the reorganization of the actin cytoskeleton. Plays a role in the regulation of cell proliferation. May act as a tumor suppressor. This Papio anubis (Olive baboon) protein is Testin (TES).